A 279-amino-acid chain; its full sequence is MKLLEKMIYVEFLMIIMVIWVVPMSYGHGAMIGNAVEAPDVAEAPGINDPSKALDTNWYDARATFYGDIHGGDTQQGACGYGNLFRQGYGLATAALSTALFNDGYTCGACYEIMCTRDPQWCLPGSVKITATNFCPANYSKTTDLWCNPPQKHFDLSLAMFLKIAKYKAGVVPVRYRRIPCSKTGGVKFETKGNPYFLMVLIYNVGGAGDIKYVQVKGNKTGWITMKKNWGQNWTTITVLTGQGLSFRVTTSDGITKDFWNVMPKNWGFGQTFDGRINF.

The first 27 residues, 1 to 27 (MKLLEKMIYVEFLMIIMVIWVVPMSYG), serve as a signal peptide directing secretion. An Expansin-like EG45 domain is found at 76–186 (QGACGYGNLF…RRIPCSKTGG (111 aa)). In terms of domain architecture, Expansin-like CBD spans 196-275 (YFLMVLIYNV…NWGFGQTFDG (80 aa)).

Belongs to the expansin family. Expansin A subfamily.

It localises to the secreted. Its subcellular location is the cell wall. It is found in the membrane. Causes loosening and extension of plant cell walls by disrupting non-covalent bonding between cellulose microfibrils and matrix glucans. No enzymatic activity has been found. This is Expansin-A22 (EXPA22) from Arabidopsis thaliana (Mouse-ear cress).